A 1413-amino-acid polypeptide reads, in one-letter code: ABC transporter G family member 33 (1413 aa).

Low complexity predominate over residues 1-10 (MGSSFRSSSS). The disordered stretch occupies residues 1-21 (MGSSFRSSSSRNEHEDGGDEA). A compositionally biased stretch (basic and acidic residues) spans 11 to 21 (RNEHEDGGDEA). The 273-residue stretch at 140–412 (LKLSGVRTNE…FEECGFQCPE (273 aa)) folds into the ABC transporter 1 domain. 172 to 179 (GPPGCGKT) is an ATP binding site. An ABC transmembrane type-2 1 domain is found at 490–702 (ELFRACISRE…AEIGLSVNEF (213 aa)). A run of 6 helical transmembrane segments spans residues 509–529 (VYLFKTFQLVLAAIITMTVFI), 546–566 (CLFFATVVLLVDGIPELSMTV), 580–600 (FYPAWAYAIPATVLKIPLSFF), 626–646 (FMILFAVHFTSISMFRCIAAI), 652–672 (AAMTAGSFVMLITFVFAGFAI), and 738–758 (LSALLGLTIIFNTIFTLALSF). Residues 813–1065 (ITFQDLNYYV…CVIEYFQNIP (253 aa)) enclose the ABC transporter 2 domain. ATP is bound at residue 858–865 (GISGAGKT). The region spanning 1138–1352 (EQFKSCLWKM…TLNLFFSSQY (215 aa)) is the ABC transmembrane type-2 2 domain. 7 helical membrane-spanning segments follow: residues 1157–1177 (YNLMRIGHTFISSFIFGLLFW), 1189–1209 (LFTVLGAIYGLVLFVGINNCT), 1245–1265 (IPYIFIQSAEFVIVIYPMIGF), 1276–1296 (LYAMFCNLLCFNYLAMFLISI), 1302–1322 (VAAILQSLFFTTFNIFAGFLI), 1330–1350 (WWVWFYYITPTSWTLNLFFSS), and 1385–1405 (ITAIILIAFPIALATMYAFFV).

The protein belongs to the ABC transporter superfamily. ABCG family. PDR (TC 3.A.1.205) subfamily. As to expression, expressed in roots and stems.

It is found in the membrane. In terms of biological role, may be a general defense protein. The polypeptide is ABC transporter G family member 33 (ABCG33) (Arabidopsis thaliana (Mouse-ear cress)).